Reading from the N-terminus, the 871-residue chain is Translation initiation factor IF-2 (871 aa).

2 disordered regions span residues 60-101 and 184-203; these read KKNI…QEVK and ESLK…KKES. Residues 61–72 are compositionally biased toward basic residues; that stretch reads KNIKTPTAKKPK. Residues 73-101 are compositionally biased toward basic and acidic residues; the sequence is KENIKEQEKLNESEKKEPKKEEKLKQEVK. Residues 370 to 537 form the tr-type G domain; that stretch reads TRAPVITIMG…IVLLQADILE (168 aa). The interval 379 to 386 is G1; the sequence is GHVDHGKT. Residue 379–386 coordinates GTP; the sequence is GHVDHGKT. Residues 404–408 form a G2 region; it reads GITQH. The interval 425-428 is G3; the sequence is DTPG. Residues 425-429 and 479-482 each bind GTP; these read DTPGH and NKMD. The G4 stretch occupies residues 479–482; that stretch reads NKMD. Residues 515 to 517 form a G5 region; it reads SAK.

This sequence belongs to the TRAFAC class translation factor GTPase superfamily. Classic translation factor GTPase family. IF-2 subfamily.

It is found in the cytoplasm. In terms of biological role, one of the essential components for the initiation of protein synthesis. Protects formylmethionyl-tRNA from spontaneous hydrolysis and promotes its binding to the 30S ribosomal subunits. Also involved in the hydrolysis of GTP during the formation of the 70S ribosomal complex. The sequence is that of Translation initiation factor IF-2 from Campylobacter jejuni subsp. jejuni serotype O:6 (strain 81116 / NCTC 11828).